We begin with the raw amino-acid sequence, 339 residues long: HTH-type transcriptional regulator KdgR (339 aa).

The region spanning 9 to 64 is the HTH lacI-type domain; sequence TTIKDVAECAGVSKSTVSRYINGKIDAISPEKVKNIKKAIAELNYRPSKMAQGLKI. The segment at residues 11-30 is a DNA-binding region (H-T-H motif); the sequence is IKDVAECAGVSKSTVSRYIN.

Its function is as follows. Transcriptional repressor of the kdgRKAT and kduID operons for pectin utilization. This Bacillus subtilis (strain 168) protein is HTH-type transcriptional regulator KdgR (kdgR).